The primary structure comprises 703 residues: Probable ATP-dependent RNA helicase DHX35 (703 aa).

The Helicase ATP-binding domain maps to 64–229 (LYLIENYQTV…FNQNETSDPA (166 aa)). Residue 77–84 (GETGCGKS) coordinates ATP. The DEAH box signature appears at 176 to 179 (DEAH). In terms of domain architecture, Helicase C-terminal spans 261–438 (TVETVVKIHQ…PVILQLKALG (178 aa)).

The protein belongs to the DEAD box helicase family. DEAH subfamily. Identified in the spliceosome C complex.

It catalyses the reaction ATP + H2O = ADP + phosphate + H(+). Its function is as follows. May be involved in pre-mRNA splicing. In Homo sapiens (Human), this protein is Probable ATP-dependent RNA helicase DHX35 (DHX35).